Consider the following 1016-residue polypeptide: FHIP family protein Bm1_18400 (1016 aa).

2 disordered regions span residues 586 to 608 (DSLR…RSSF) and 757 to 778 (SDGF…PLGK).

This sequence belongs to the FHIP family.

This is FHIP family protein Bm1_18400 from Brugia malayi (Filarial nematode worm).